A 252-amino-acid chain; its full sequence is Ribosomal RNA small subunit methyltransferase A (252 aa).

S-adenosyl-L-methionine is bound by residues Asn11, Leu13, Gly38, Glu60, Asp82, and Asn99.

Belongs to the class I-like SAM-binding methyltransferase superfamily. rRNA adenine N(6)-methyltransferase family. RsmA subfamily.

The protein localises to the cytoplasm. It catalyses the reaction adenosine(1518)/adenosine(1519) in 16S rRNA + 4 S-adenosyl-L-methionine = N(6)-dimethyladenosine(1518)/N(6)-dimethyladenosine(1519) in 16S rRNA + 4 S-adenosyl-L-homocysteine + 4 H(+). Specifically dimethylates two adjacent adenosines (A1518 and A1519) in the loop of a conserved hairpin near the 3'-end of 16S rRNA in the 30S particle. May play a critical role in biogenesis of 30S subunits. The protein is Ribosomal RNA small subunit methyltransferase A of Hydrogenobaculum sp. (strain Y04AAS1).